Here is a 508-residue protein sequence, read N- to C-terminus: ATP synthase subunit alpha (508 aa).

Position 169 to 176 (169 to 176 (GDRGTGKS)) interacts with ATP.

Belongs to the ATPase alpha/beta chains family. F-type ATPases have 2 components, CF(1) - the catalytic core - and CF(0) - the membrane proton channel. CF(1) has five subunits: alpha(3), beta(3), gamma(1), delta(1), epsilon(1). CF(0) has three main subunits: a(1), b(2) and c(9-12). The alpha and beta chains form an alternating ring which encloses part of the gamma chain. CF(1) is attached to CF(0) by a central stalk formed by the gamma and epsilon chains, while a peripheral stalk is formed by the delta and b chains.

It localises to the cell membrane. The enzyme catalyses ATP + H2O + 4 H(+)(in) = ADP + phosphate + 5 H(+)(out). Functionally, produces ATP from ADP in the presence of a proton gradient across the membrane. The alpha chain is a regulatory subunit. This chain is ATP synthase subunit alpha, found in Natranaerobius thermophilus (strain ATCC BAA-1301 / DSM 18059 / JW/NM-WN-LF).